The primary structure comprises 144 residues: Phospholipase A2, membrane associated (144 aa).

The N-terminal stretch at 1–20 (MKTLLLLAVIMAIGLLQVHG) is a signal peptide. 7 disulfides stabilise this stretch: C46–C137, C48–C64, C63–C117, C69–C144, C70–C110, C79–C103, and C97–C108. The Ca(2+) site is built by Y47, G49, and S51. H67 is a catalytic residue. D68 lines the Ca(2+) pocket. The active site involves D111.

It belongs to the phospholipase A2 family. Requires Ca(2+) as cofactor.

It localises to the secreted. The protein resides in the cell membrane. It is found in the mitochondrion outer membrane. It catalyses the reaction a 1,2-diacyl-sn-glycero-3-phosphoethanolamine + H2O = a 1-acyl-sn-glycero-3-phosphoethanolamine + a fatty acid + H(+). The enzyme catalyses 1-hexadecanoyl-2-(9Z-octadecenoyl)-sn-glycero-3-phosphoethanolamine + H2O = 1-hexadecanoyl-sn-glycero-3-phosphoethanolamine + (9Z)-octadecenoate + H(+). It carries out the reaction 1-hexadecanoyl-2-(9Z,12Z-octadecadienoyl)-sn-glycero-3-phosphoethanolamine + H2O = 1-hexadecanoyl-sn-glycero-3-phosphoethanolamine + (9Z,12Z)-octadecadienoate + H(+). The catalysed reaction is 1-hexadecanoyl-2-(5Z,8Z,11Z,14Z-eicosatetraenoyl)-sn-glycero-3-phosphoethanolamine + H2O = 1-hexadecanoyl-sn-glycero-3-phosphoethanolamine + (5Z,8Z,11Z,14Z)-eicosatetraenoate + H(+). It catalyses the reaction N-hexadecanoyl-1,2-di-(9Z-octadecenoyl)-sn-glycero-3-phosphoethanolamine + H2O = N-hexadecanoyl-1-(9Z-octadecenoyl)-sn-glycero-3-phosphoethanolamine + (9Z)-octadecenoate + H(+). The enzyme catalyses 1,2-dihexadecanoyl-sn-glycero-3-phospho-(1'-sn-glycerol) + H2O = 1-hexadecanoyl-sn-glycero-3-phospho-(1'-sn-glycerol) + hexadecanoate + H(+). It carries out the reaction 1-hexadecanoyl-2-(9Z-octadecenoyl)-sn-glycero-3-phosphoglycerol + H2O = 1-hexadecanoyl-sn-glycero-3-phosphoglycerol + (9Z)-octadecenoate + H(+). The catalysed reaction is 1-hexadecanoyl-2-(9Z-octadecenoyl)-sn-glycero-3-phospho-(1'-sn-glycerol) + H2O = 1-hexadecanoyl-sn-glycero-3-phospho-(1'-sn-glycerol) + (9Z)-octadecenoate + H(+). It catalyses the reaction a 1,2-diacyl-sn-glycero-3-phosphocholine + H2O = a 1-acyl-sn-glycero-3-phosphocholine + a fatty acid + H(+). The enzyme catalyses 1,2-dihexadecanoyl-sn-glycero-3-phosphocholine + H2O = 1-hexadecanoyl-sn-glycero-3-phosphocholine + hexadecanoate + H(+). It carries out the reaction 1-hexadecanoyl-2-(9Z-octadecenoyl)-sn-glycero-3-phosphocholine + H2O = 1-hexadecanoyl-sn-glycero-3-phosphocholine + (9Z)-octadecenoate + H(+). The catalysed reaction is 1-hexadecanoyl-2-(9Z,12Z-octadecadienoyl)-sn-glycero-3-phosphocholine + H2O = (9Z,12Z)-octadecadienoate + 1-hexadecanoyl-sn-glycero-3-phosphocholine + H(+). It catalyses the reaction 1-hexadecanoyl-2-(4Z,7Z,10Z,13Z,16Z,19Z-docosahexaenoyl)-sn-glycero-3-phosphocholine + H2O = (4Z,7Z,10Z,13Z,16Z,19Z)-docosahexaenoate + 1-hexadecanoyl-sn-glycero-3-phosphocholine + H(+). Secretory calcium-dependent phospholipase A2 that primarily targets extracellular phospholipids with implications in host antimicrobial defense, inflammatory response and tissue regeneration. Hydrolyzes the ester bond of the fatty acyl group attached at sn-2 position of phospholipids (phospholipase A2 activity) with preference for phosphatidylethanolamines and phosphatidylglycerols over phosphatidylcholines. Contributes to lipid remodeling of cellular membranes and generation of lipid mediators involved in pathogen clearance. Displays bactericidal activity against Gram-positive bacteria by directly hydrolyzing phospholipids of the bacterial membrane. Upon sterile inflammation, targets membrane phospholipids of extracellular mitochondria released from activated platelets, generating free unsaturated fatty acids such as arachidonate that is used by neighboring leukocytes to synthesize inflammatory eicosanoids such as leukotrienes. Simultaneously, by compromising mitochondrial membrane integrity, promotes the release in circulation of potent damage-associated molecular pattern molecules that activate the innate immune response. Plays a stem cell regulator role in the intestinal crypt. Within intracellular compartment mediates Paneth cell differentiation and its stem cell supporting functions by inhibiting Wnt signaling pathway in intestinal stem cell (ICS). Secreted in the intestinal lumen upon inflammation, acts in an autocrine way and promotes prostaglandin E2 synthesis that stimulates Wnt signaling pathway in ICS cells and tissue regeneration. May play a role in the biosynthesis of N-acyl ethanolamines that regulate energy metabolism and inflammation. Hydrolyzes N-acyl phosphatidylethanolamines to N-acyl lysophosphatidylethanolamines, which are further cleaved by a lysophospholipase D to release N-acyl ethanolamines. Independent of its catalytic activity, acts as a ligand for integrins. Binds to and activates integrins ITGAV:ITGB3, ITGA4:ITGB1 and ITGA5:ITGB1. Binds to a site (site 2) which is distinct from the classical ligand-binding site (site 1) and induces integrin conformational changes and enhanced ligand binding to site 1. Induces cell proliferation in an integrin-dependent manner. In Bos taurus (Bovine), this protein is Phospholipase A2, membrane associated (PLA2G2A).